We begin with the raw amino-acid sequence, 257 residues long: Pyridoxine 5'-phosphate synthase (257 aa).

3-amino-2-oxopropyl phosphate is bound at residue Asn6. 8–9 contributes to the 1-deoxy-D-xylulose 5-phosphate binding site; sequence DH. A 3-amino-2-oxopropyl phosphate-binding site is contributed by Arg17. His41 (proton acceptor) is an active-site residue. The 1-deoxy-D-xylulose 5-phosphate site is built by Arg43 and His48. The Proton acceptor role is filled by Glu68. Thr98 lines the 1-deoxy-D-xylulose 5-phosphate pocket. His210 serves as the catalytic Proton donor. 3-amino-2-oxopropyl phosphate-binding positions include Gly211 and 232–233; that span reads GQ.

The protein belongs to the PNP synthase family. As to quaternary structure, homooctamer; tetramer of dimers.

Its subcellular location is the cytoplasm. It carries out the reaction 3-amino-2-oxopropyl phosphate + 1-deoxy-D-xylulose 5-phosphate = pyridoxine 5'-phosphate + phosphate + 2 H2O + H(+). Its pathway is cofactor biosynthesis; pyridoxine 5'-phosphate biosynthesis; pyridoxine 5'-phosphate from D-erythrose 4-phosphate: step 5/5. Catalyzes the complicated ring closure reaction between the two acyclic compounds 1-deoxy-D-xylulose-5-phosphate (DXP) and 3-amino-2-oxopropyl phosphate (1-amino-acetone-3-phosphate or AAP) to form pyridoxine 5'-phosphate (PNP) and inorganic phosphate. The polypeptide is Pyridoxine 5'-phosphate synthase (Campylobacter jejuni subsp. doylei (strain ATCC BAA-1458 / RM4099 / 269.97)).